The chain runs to 166 residues: Macrocypin-5a (166 aa).

The segment at 20-39 (NIPGGMYASSKDGKDEPVTA) is disordered.

Belongs to the protease inhibitor I85 family.

Inhibits papain and cysteine cathepsin endopeptidases, and also inhibits cathepsins B and H, which exhibit both exopeptidase and endopeptidase activities. This Macrolepiota procera (Parasol mushroom) protein is Macrocypin-5a.